Reading from the N-terminus, the 137-residue chain is 6,7-dimethyl-8-ribityllumazine synthase (137 aa).

Residues Phe11, 43 to 45 (SFD), and 67 to 69 (CVI) each bind 5-amino-6-(D-ribitylamino)uracil. 72–73 (DT) is a binding site for (2S)-2-hydroxy-3-oxobutyl phosphate. The Proton donor role is filled by His75. Leu100 serves as a coordination point for 5-amino-6-(D-ribitylamino)uracil. A (2S)-2-hydroxy-3-oxobutyl phosphate-binding site is contributed by Arg115.

Belongs to the DMRL synthase family. As to quaternary structure, forms an icosahedral capsid composed of 60 subunits, arranged as a dodecamer of pentamers.

It carries out the reaction (2S)-2-hydroxy-3-oxobutyl phosphate + 5-amino-6-(D-ribitylamino)uracil = 6,7-dimethyl-8-(1-D-ribityl)lumazine + phosphate + 2 H2O + H(+). Its pathway is cofactor biosynthesis; riboflavin biosynthesis; riboflavin from 2-hydroxy-3-oxobutyl phosphate and 5-amino-6-(D-ribitylamino)uracil: step 1/2. In terms of biological role, catalyzes the formation of 6,7-dimethyl-8-ribityllumazine by condensation of 5-amino-6-(D-ribitylamino)uracil with 3,4-dihydroxy-2-butanone 4-phosphate. This is the penultimate step in the biosynthesis of riboflavin. The protein is 6,7-dimethyl-8-ribityllumazine synthase of Methanococcus maripaludis (strain C5 / ATCC BAA-1333).